The sequence spans 317 residues: Heme A synthase (317 aa).

The Cytoplasmic segment spans residues 1–6 (MQRSLK). A helical membrane pass occupies residues 7 to 27 (WFASTTTVAMLFVLIGGALVT). Over 28–54 (KTDSGMGCGRSWPLCHGQWIPDDITPQ) the chain is Extracellular. Residues Cys35 and Cys42 are joined by a disulfide bond. Residues 55-75 (LVIELSHRLVSGLAAIMVLIL) traverse the membrane as a helical segment. Glu58 is a catalytic residue. His61 serves as a coordination point for heme o. The Cytoplasmic portion of the chain corresponds to 76 to 91 (CIRSWRVMGHVRETKP). Residues 92 to 112 (LAVLSFVFLVLQSLIGAAAVV) form a helical membrane-spanning segment. The Extracellular portion of the chain corresponds to 113-123 (WGQSDFVMALH). His123 is a heme o binding site. A helical membrane pass occupies residues 124–144 (FGISLISFAAVLLLTLLIFVV). Topologically, residues 145-159 (DKKFSPTSLQLDGQM) are cytoplasmic. A helical membrane pass occupies residues 160–180 (RFHIYGIIIYSYLVVYTGALV). Residues 181 to 214 (RHTNASLACPSWPLCAKSRLLPVQFHEWVQMGHR) are Extracellular-facing. Cys189 and Cys195 are oxidised to a cystine. Residue His213 participates in heme b binding. A helical transmembrane segment spans residues 215–235 (LAAAVIIIWIAVATVHAARYY). The Cytoplasmic segment spans residues 236-243 (REQPVIYY). The chain crosses the membrane as a helical span at residues 244–264 (GWIISLLLVLAQMVTGALVVF). Residues 265–272 (TELNLYIS) are Extracellular-facing. A helical transmembrane segment spans residues 273–293 (LAHAFFISCLFGVLSYLLLLA). A heme b-binding site is contributed by His275. Residues 294–317 (LRTRRRPATAAGRSVEDTASAPLK) lie on the Cytoplasmic side of the membrane.

This sequence belongs to the COX15/CtaA family. Type 1 subfamily. Interacts with CtaB. The cofactor is heme b.

It localises to the cell membrane. It carries out the reaction Fe(II)-heme o + 2 A + H2O = Fe(II)-heme a + 2 AH2. The protein operates within porphyrin-containing compound metabolism; heme A biosynthesis; heme A from heme O: step 1/1. Catalyzes the conversion of heme O to heme A by two successive hydroxylations of the methyl group at C8. The first hydroxylation forms heme I, the second hydroxylation results in an unstable dihydroxymethyl group, which spontaneously dehydrates, resulting in the formyl group of heme A. This chain is Heme A synthase, found in Geobacillus thermodenitrificans.